A 1011-amino-acid polypeptide reads, in one-letter code: MSFLLVEPDLVTAAAANLAGIRSALSEAAAAASTPTTALASAGADEVSAAVSRLFGAYGQQFQALNARAATFHAEFVSLLNGGAAAYTGAEAASVSSMQALLDAVNAPTQTLLGRPLIGNGADGVAGTGSNAGGNGGPGGILYGNGGNGGAGGNGGAAGLIGNGGAGGAGGAGGAGGAGGAGGTGGLLYGNGGAGGNGGSAAAAGGAGGNALLFGNGGNGGSGASGGAAGHAGTIFGNGGNAGAGSGLAGADGGLFGNGGDGGSSTSKAGGAGGNALFGNGGDGGSSTVAAGGAGGNTLVGNGGAGGAGGTSGLTGSGVAGGAGGSVGLWGSGGAGGDGGAATSLLGVGMNAGAGGAGGNAGLLYGNGGAGGAGGNGGDTTVPLFDSGVGGAGGAGGNASLFGNGGTGGVGGKGGTSSDLASATSGAGGAGGAGGVGGLLYGNGGNGGAGGIGGAAINILANAGAGGAGGAAGSSFIGNGGNGGAGGAGGAAALFSSGVGGAGGSGGTALLLGSGGAGGNGGTGGANSGSLFASPGGTGGAGGHGGAGGLIWGNGGAGGNGGNGGTTADGALEGGTGGIGGTGGSAIAFGNGGQGGAGGTGGDHSGGNGIGGKGGASGNGGNAGQVFGDGGTGGTGGAGGAGSGTKAGGTGSDGGHGGNATLIGNGGDGGAGGAGGAGSPAGAPGNGGTGGTGGVLFGQSGSSGPPGAAALAFPSLSSSVPILGPYEDLIANTVANLASIGNTWLADPAPFLQQYLANQFGYGQLTLTALTDATRDFAIGLAGIPPSLQSALQALAAGDVSGAVTDVLGAVVKVFVSGVDASDLSNILLLGPVGDLFPILSIPGAMSQNFTNVVMTVTDTTIAFSIDTTNLTGVMTFGLPLAMTLNAVGSPITTAIAFAESTTAFVSAVQAGNLQAAAAALVGAPANVANGFLNGEARLPLALPTSATGGIPVTVEVPVGGILAPLQPFQATAVIPVIGPVTVTLEGTPAGGIVPALVNYAPTQLAQAIAP.

In terms of domain architecture, PE spans 1 to 93 (MSFLLVEPDL…AAAYTGAEAA (93 aa)). A PGRS domain region spans residues 130–696 (SNAGGNGGPG…GGTGGTGGVL (567 aa)). Positions 595–696 (GGAGGTGGDH…GGTGGTGGVL (102 aa)) are enriched in gly residues. A disordered region spans residues 595–701 (GGAGGTGGDH…TGGVLFGQSG (107 aa)). The tract at residues 697–1011 (FGQSGSSGPP…PTQLAQAIAP (315 aa)) is C-terminal domain.

The protein belongs to the mycobacterial PE family. PGRS subfamily.

The protein localises to the secreted. The protein resides in the cell wall. It is found in the cell surface. Its function is as follows. Mediates suppression of pro-inflammatory immune response in macrophages via modulation of host cytokine response. Required for full virulence. Involved in inhibition of phago-lysosome fusion. The protein is PE-PGRS family protein PE_PGRS30 of Mycobacterium tuberculosis (strain ATCC 25618 / H37Rv).